The chain runs to 327 residues: Phenylalanine--tRNA ligase alpha subunit (327 aa).

Position 252 (Glu252) interacts with Mg(2+).

This sequence belongs to the class-II aminoacyl-tRNA synthetase family. Phe-tRNA synthetase alpha subunit type 1 subfamily. Tetramer of two alpha and two beta subunits. The cofactor is Mg(2+).

Its subcellular location is the cytoplasm. The enzyme catalyses tRNA(Phe) + L-phenylalanine + ATP = L-phenylalanyl-tRNA(Phe) + AMP + diphosphate + H(+). This Escherichia coli O127:H6 (strain E2348/69 / EPEC) protein is Phenylalanine--tRNA ligase alpha subunit.